An 899-amino-acid polypeptide reads, in one-letter code: Translation initiation factor IF-2 (899 aa).

Disordered stretches follow at residues 115-137 (EAKARAEQQAREAAEQKARLQTE), 170-189 (RGGGTVKPAPKPAETLEQKK), and 262-309 (DREI…HGFE). The tr-type G domain occupies 399-568 (TRPPVVTIMG…LIQSELMELK (170 aa)). Residues 408–415 (GHVDHGKT) are G1. 408 to 415 (GHVDHGKT) lines the GTP pocket. The G2 stretch occupies residues 433 to 437 (GITQH). The interval 454-457 (DTPG) is G3. GTP is bound by residues 454–458 (DTPGH) and 508–511 (NKMD). Residues 508 to 511 (NKMD) form a G4 region. The tract at residues 544–546 (SAH) is G5.

It belongs to the TRAFAC class translation factor GTPase superfamily. Classic translation factor GTPase family. IF-2 subfamily.

Its subcellular location is the cytoplasm. Its function is as follows. One of the essential components for the initiation of protein synthesis. Protects formylmethionyl-tRNA from spontaneous hydrolysis and promotes its binding to the 30S ribosomal subunits. Also involved in the hydrolysis of GTP during the formation of the 70S ribosomal complex. This Acinetobacter baumannii (strain SDF) protein is Translation initiation factor IF-2.